Here is a 2359-residue protein sequence, read N- to C-terminus: Pre-mRNA-processing-splicing factor 8A (2359 aa).

The tract at residues 1–54 (MWNNNDGMPLAPPGTGGSMMPPPPAAHPSYTALPPPSNPTPPVEPTPEEAEAKL) is disordered. Residues 33 to 45 (LPPPSNPTPPVEP) show a composition bias toward pro residues. In terms of domain architecture, MPN spans 2127–2258 (TYIMPKNILK…LTSYKLTQTG (132 aa)).

As to quaternary structure, interacts with CLO.

The protein resides in the nucleus. Functionally, functions as a scaffold that mediates the ordered assembly of spliceosomal proteins and snRNAs. Required for the assembly of the U4/U6-U5 tri-snRNP complex. Required for embryo development. Required for splicing efficiency of COOLAIR introns and usage of the proximal poly(A) site. COOLAIR is a set of long non-coding antisense transcripts produced at the FLOWERING LOCUS C (FLC). COOLAIR initiates just downstream of the major sense transcript poly(A) site and terminates either early or extends into the FLC promoter region. Splicing of COOLAIR by PRP8A is functionally important for FLC regulation. In Arabidopsis thaliana (Mouse-ear cress), this protein is Pre-mRNA-processing-splicing factor 8A.